The chain runs to 83 residues: MNSEQLTEILKAAFPDAEVAVSGQAGKFDLRIVDNQFEGKRPVPRQQAVYAPLNSYIASGEVHAVTIRAMTKEEWRKASMFGA.

The protein belongs to the BolA/IbaG family.

This is an uncharacterized protein from Acinetobacter guillouiae (Acinetobacter genomosp. 11).